A 545-amino-acid polypeptide reads, in one-letter code: Chaperonin GroEL (545 aa).

ATP-binding positions include 30 to 33 (TLGP), lysine 51, 87 to 91 (DGTTT), glycine 415, and aspartate 495.

Belongs to the chaperonin (HSP60) family. Forms a cylinder of 14 subunits composed of two heptameric rings stacked back-to-back. Interacts with the co-chaperonin GroES.

Its subcellular location is the cytoplasm. It catalyses the reaction ATP + H2O + a folded polypeptide = ADP + phosphate + an unfolded polypeptide.. Functionally, together with its co-chaperonin GroES, plays an essential role in assisting protein folding. The GroEL-GroES system forms a nano-cage that allows encapsulation of the non-native substrate proteins and provides a physical environment optimized to promote and accelerate protein folding. This chain is Chaperonin GroEL, found in Shewanella oneidensis (strain ATCC 700550 / JCM 31522 / CIP 106686 / LMG 19005 / NCIMB 14063 / MR-1).